The following is a 145-amino-acid chain: D-aminoacyl-tRNA deacylase (145 aa).

The Gly-cisPro motif, important for rejection of L-amino acids motif lies at 137–138; sequence GP.

It belongs to the DTD family. In terms of assembly, homodimer.

The protein resides in the cytoplasm. It carries out the reaction glycyl-tRNA(Ala) + H2O = tRNA(Ala) + glycine + H(+). The enzyme catalyses a D-aminoacyl-tRNA + H2O = a tRNA + a D-alpha-amino acid + H(+). An aminoacyl-tRNA editing enzyme that deacylates mischarged D-aminoacyl-tRNAs. Also deacylates mischarged glycyl-tRNA(Ala), protecting cells against glycine mischarging by AlaRS. Acts via tRNA-based rather than protein-based catalysis; rejects L-amino acids rather than detecting D-amino acids in the active site. By recycling D-aminoacyl-tRNA to D-amino acids and free tRNA molecules, this enzyme counteracts the toxicity associated with the formation of D-aminoacyl-tRNA entities in vivo and helps enforce protein L-homochirality. This Shigella dysenteriae serotype 1 (strain Sd197) protein is D-aminoacyl-tRNA deacylase.